The primary structure comprises 70 residues: Small, acid-soluble spore protein 1 (70 aa).

The protein belongs to the alpha/beta-type SASP family.

In terms of biological role, SASP are bound to spore DNA. They are double-stranded DNA-binding proteins that cause DNA to change to an a-like conformation. They protect the DNA backbone from chemical and enzymatic cleavage and are thus involved in dormant spore's high resistance to UV light. This is Small, acid-soluble spore protein 1 (sasP-1) from Geobacillus stearothermophilus (Bacillus stearothermophilus).